A 917-amino-acid polypeptide reads, in one-letter code: Protein translocase subunit SecA (917 aa).

ATP contacts are provided by residues glutamine 87, 105–109, and aspartate 501; that span reads GEGKT. Zn(2+) is bound by residues cysteine 901, cysteine 903, cysteine 912, and histidine 913.

It belongs to the SecA family. Monomer and homodimer. Part of the essential Sec protein translocation apparatus which comprises SecA, SecYEG and auxiliary proteins SecDF-YajC and YidC. Zn(2+) serves as cofactor.

The protein resides in the cell inner membrane. Its subcellular location is the cytoplasm. It catalyses the reaction ATP + H2O + cellular proteinSide 1 = ADP + phosphate + cellular proteinSide 2.. In terms of biological role, part of the Sec protein translocase complex. Interacts with the SecYEG preprotein conducting channel. Has a central role in coupling the hydrolysis of ATP to the transfer of proteins into and across the cell membrane, serving both as a receptor for the preprotein-SecB complex and as an ATP-driven molecular motor driving the stepwise translocation of polypeptide chains across the membrane. The polypeptide is Protein translocase subunit SecA (Granulibacter bethesdensis (strain ATCC BAA-1260 / CGDNIH1)).